We begin with the raw amino-acid sequence, 204 residues long: ATP phosphoribosyltransferase (204 aa).

This sequence belongs to the ATP phosphoribosyltransferase family. Short subfamily. As to quaternary structure, heteromultimer composed of HisG and HisZ subunits.

Its subcellular location is the cytoplasm. The enzyme catalyses 1-(5-phospho-beta-D-ribosyl)-ATP + diphosphate = 5-phospho-alpha-D-ribose 1-diphosphate + ATP. It participates in amino-acid biosynthesis; L-histidine biosynthesis; L-histidine from 5-phospho-alpha-D-ribose 1-diphosphate: step 1/9. Its function is as follows. Catalyzes the condensation of ATP and 5-phosphoribose 1-diphosphate to form N'-(5'-phosphoribosyl)-ATP (PR-ATP). Has a crucial role in the pathway because the rate of histidine biosynthesis seems to be controlled primarily by regulation of HisG enzymatic activity. The sequence is that of ATP phosphoribosyltransferase from Staphylococcus aureus (strain Mu3 / ATCC 700698).